We begin with the raw amino-acid sequence, 1757 residues long: Serine/threonine-protein kinase WNK3 (1757 aa).

Residues 1 to 25 (MATDSGEPASTEDSEKPDGVSFENR) form a disordered region. At S62 the chain carries Phosphoserine. The segment covering 66-82 (TEDDKVAESSRRDERKA) has biased composition (basic and acidic residues). Positions 66–85 (TEDDKVAESSRRDERKAATN) are disordered. Positions 146 to 404 (LKFDIELGRG…IKDLLNHAFF (259 aa)) constitute a Protein kinase domain. ATP-binding positions include 226–229 (TELM) and K276. D293 serves as the catalytic Proton acceptor. 2 positions are modified to phosphoserine; by autocatalysis: S303 and S307. The tract at residues 536–546 (EYEETEVDQHV) is interaction with KLHL3. At T540 the chain carries Phosphothreonine. Composition is skewed to polar residues over residues 551–570 (LQGK…SSEP), 578–604 (SDTS…KLTQ), and 674–689 (SVKE…SGNG). Disordered regions lie at residues 551–604 (LQGK…KLTQ) and 674–705 (SVKE…PRPE). S1039 bears the Phosphoserine mark. The span at 1404–1422 (VATEKNVTSTTEVSVQSGS) shows a compositional bias: polar residues. Disordered regions lie at residues 1404 to 1440 (VATE…QTCT), 1479 to 1498 (SLFY…EIED), and 1536 to 1574 (ATKD…MTHS). Residues 1479–1491 (SLFYSPSSPMSSD) are compositionally biased toward low complexity. Phosphoserine is present on residues S1550 and S1553. The segment covering 1555–1566 (RRPRSFKSKLRS) has biased composition (basic residues). S1595 carries the phosphoserine modification. Disordered stretches follow at residues 1621 to 1650 (HFPS…CEST) and 1734 to 1757 (PGMN…PGPK). The span at 1624–1637 (SKPSLNQLKQSQQK) shows a compositional bias: low complexity. The span at 1641 to 1650 (ENWNKSCEST) shows a compositional bias: polar residues. A compositionally biased stretch (pro residues) spans 1742–1757 (PAPPVQNPASIPPGPK).

It belongs to the protein kinase superfamily. Ser/Thr protein kinase family. WNK subfamily. As to quaternary structure, interacts with WNK1 and WNK4. The cofactor is Mg(2+). Autophosphorylated at Ser-303 and Ser-307, promoting its activity. Phosphorylation at Thr-540 prevents interaction with KLHL3 and subsequent ubiquitination and degradation by the BCR(KLHL3) complex. Post-translationally, ubiquitinated by the BCR(KLHL2) complex, leading to its degradation. Ubiquitinated by the BCR(KLHL3) complex, leading to its degradation. As to expression, expressed in pancreatic duct.

It is found in the cytoplasm. The catalysed reaction is L-seryl-[protein] + ATP = O-phospho-L-seryl-[protein] + ADP + H(+). The enzyme catalyses L-threonyl-[protein] + ATP = O-phospho-L-threonyl-[protein] + ADP + H(+). Activated in response to hyperosmotic stress: cell shrinkage promotes formation of a membraneless compartment that concentrates WNK3 with its substrates, OXSR1/OSR1 and STK39/SPAK. Activation requires autophosphorylation of Ser-307 and, to a lower extent, Ser-303. Autophosphorylation and subsequent activation is inhibited by increases in intracellular ionic strength: Cl(-) potently inhibits WNK3 kinase activity via direct binding. Also inhibited by K(+) ions. Kinase activity is inhibited by WNK4. Serine/threonine-protein kinase component of the WNK3-SPAK/OSR1 kinase cascade, which plays an important role in the regulation of electrolyte homeostasis and regulatory volume increase in response to hyperosmotic stress. WNK3 mediates regulatory volume increase in response to hyperosmotic stress by acting as a molecular crowding sensor, which senses cell shrinkage and mediates formation of a membraneless compartment by undergoing liquid-liquid phase separation. The membraneless compartment concentrates WNK3 with its substrates, OXSR1/OSR1 and STK39/SPAK, promoting WNK3-dependent phosphorylation and activation of downstream kinases OXSR1/OSR1 and STK39/SPAK. Following activation, OXSR1/OSR1 and STK39/SPAK catalyze phosphorylation of ion cotransporters SLC12A1/NKCC2, SLC12A2/NKCC1, SLC12A3/NCC, SLC12A4/KCC1, SLC12A5/KCC2 or SLC12A6/KCC3, regulating their activity. Phosphorylation of Na-K-Cl cotransporters SLC12A2/NKCC1 and SLC12A2/NKCC1 promote their activation and ion influx; simultaneously, phosphorylation of K-Cl cotransporters SLC12A4/KCC1, SLC12A5/KCC2 and SLC12A6/KCC3 inhibits its activity, blocking ion efflux. Phosphorylates WNK4, possibly regulating the activity of SLC12A3/NCC. May also phosphorylate NEDD4L. Also acts as a scaffold protein independently of its protein kinase activity: negatively regulates cell membrane localization of various transporters and channels, such as KCNJ1 and SLC26A9. Increases Ca(2+) influx mediated by TRPV5 and TRPV6 by enhancing their membrane expression level via a kinase-dependent pathway. This is Serine/threonine-protein kinase WNK3 from Mus musculus (Mouse).